The chain runs to 175 residues: Ribulose bisphosphate carboxylase small subunit, chloroplastic (175 aa).

The transit peptide at 1–34 (MSFATTNKTIVPCATTKQIVRPRFLSNGTISKSR) directs the protein to the chloroplast.

It belongs to the RuBisCO small chain family. As to quaternary structure, heterohexadecamer of 8 large and 8 small subunits.

It localises to the plastid. Its subcellular location is the chloroplast. RuBisCO catalyzes two reactions: the carboxylation of D-ribulose 1,5-bisphosphate, the primary event in carbon dioxide fixation, as well as the oxidative fragmentation of the pentose substrate. Both reactions occur simultaneously and in competition at the same active site. Although the small subunit is not catalytic it is essential for maximal activity. In Batophora oerstedii (Green alga), this protein is Ribulose bisphosphate carboxylase small subunit, chloroplastic.